Here is a 465-residue protein sequence, read N- to C-terminus: Methionine aminopeptidase 2-1 (465 aa).

Residues 1–100 form a disordered region; it reads MGSKTAENES…QSSPPRIPLA (100 aa). Basic and acidic residues predominate over residues 31–40; that stretch reads RGAHWSRDGD. A compositionally biased stretch (basic residues) spans 75–87; sequence SKKRKKRPKKKTS. Residue H216 coordinates substrate. 3 residues coordinate a divalent metal cation: D237, D248, and H317. H325 contributes to the substrate binding site. The a divalent metal cation site is built by E350 and E446.

The protein belongs to the peptidase M24A family. Methionine aminopeptidase eukaryotic type 2 subfamily. The cofactor is Co(2+). Zn(2+) is required as a cofactor. It depends on Mn(2+) as a cofactor. Requires Fe(2+) as cofactor.

It is found in the cytoplasm. The catalysed reaction is Release of N-terminal amino acids, preferentially methionine, from peptides and arylamides.. Cotranslationally removes the N-terminal methionine from nascent proteins. The N-terminal methionine is often cleaved when the second residue in the primary sequence is small and uncharged (Met-Ala-, Cys, Gly, Pro, Ser, Thr, or Val). This Penicillium rubens (strain ATCC 28089 / DSM 1075 / NRRL 1951 / Wisconsin 54-1255) (Penicillium chrysogenum) protein is Methionine aminopeptidase 2-1.